Here is a 334-residue protein sequence, read N- to C-terminus: Biotin synthase (334 aa).

A Radical SAM core domain is found at 54–281 (QAIQLSTLLS…KSYVRLSAGR (228 aa)). Residues Cys-69, Cys-73, and Cys-76 each contribute to the [4Fe-4S] cluster site. Cys-113, Cys-144, Cys-204, and Arg-276 together coordinate [2Fe-2S] cluster.

Belongs to the radical SAM superfamily. Biotin synthase family. As to quaternary structure, homodimer. It depends on [4Fe-4S] cluster as a cofactor. [2Fe-2S] cluster serves as cofactor.

The enzyme catalyses (4R,5S)-dethiobiotin + (sulfur carrier)-SH + 2 reduced [2Fe-2S]-[ferredoxin] + 2 S-adenosyl-L-methionine = (sulfur carrier)-H + biotin + 2 5'-deoxyadenosine + 2 L-methionine + 2 oxidized [2Fe-2S]-[ferredoxin]. Its pathway is cofactor biosynthesis; biotin biosynthesis; biotin from 7,8-diaminononanoate: step 2/2. Functionally, catalyzes the conversion of dethiobiotin (DTB) to biotin by the insertion of a sulfur atom into dethiobiotin via a radical-based mechanism. The chain is Biotin synthase from Haemophilus ducreyi (strain 35000HP / ATCC 700724).